The sequence spans 408 residues: Neutral cholesterol ester hydrolase 1 (408 aa).

The Cytoplasmic portion of the chain corresponds to 1-4 (MRSS). Residues 5 to 25 (CVLLAALLALVAYYVYIPLPS) form a helical; Signal-anchor for type II membrane protein membrane-spanning segment. Topologically, residues 26-408 (AVSDPWKLML…SYFKWLDQNL (383 aa)) are lumenal. The Involved in the stabilization of the negatively charged intermediate by the formation of the oxyanion hole motif lies at 113–115 (HGG). The active site involves S191. N270 is a glycosylation site (N-linked (GlcNAc...) asparagine). Residue D348 is part of the active site. N367 is a glycosylation site (N-linked (GlcNAc...) asparagine). Residue H378 is part of the active site. An N-linked (GlcNAc...) asparagine glycan is attached at N389.

This sequence belongs to the 'GDXG' lipolytic enzyme family. Post-translationally, N-glycosylated.

It localises to the cell membrane. It is found in the microsome. It catalyses the reaction a 1-O-alkyl-2-acetyl-sn-glycerol + H2O = a 1-O-alkyl-sn-glycerol + acetate + H(+). The catalysed reaction is 1-O-hexadecyl-2-acetyl-sn-glycerol + H2O = 1-O-hexadecyl-sn-glycerol + acetate + H(+). It carries out the reaction a cholesterol ester + H2O = cholesterol + a fatty acid + H(+). The enzyme catalyses cholesteryl (9Z-octadecenoate) + H2O = cholesterol + (9Z)-octadecenoate + H(+). In terms of biological role, hydrolyzes 2-acetyl monoalkylglycerol ether (1-O-alkyl-2-acetyl-sn-glycerol), the penultimate precursor of the pathway for de novo synthesis of platelet-activating factor. May be responsible for the hydrolysis of cholesterol esters (such as cholesteryl (9Z-octadecenoate)) in macrophages. Also involved in organ detoxification by hydrolyzing exogenous organophosphorus compounds. The chain is Neutral cholesterol ester hydrolase 1 (Nceh1) from Rattus norvegicus (Rat).